Consider the following 541-residue polypeptide: Thioredoxin reductase (541 aa).

FAD contacts are provided by residues 51–52, 71–74, 87–88, 92–96, Ala-161, Asp-357, and 364–366; these read PG, DYVK, TC, GCVPK, and ELA. The cysteines at positions 88 and 93 are disulfide-linked. The loop important for the interaction with TRX1 stretch occupies residues 438-452; the sequence is HRQKHIRAQKDEYDL. His-509 is a binding site for FAD. The Proton acceptor role is filled by His-509. Residues Cys-535 and Cys-540 are joined by a disulfide bond.

It belongs to the class-I pyridine nucleotide-disulfide oxidoreductase family. As to quaternary structure, homodimer. The cofactor is FAD.

Its subcellular location is the cytoplasm. The enzyme catalyses [thioredoxin]-dithiol + NADP(+) = [thioredoxin]-disulfide + NADPH + H(+). Its function is as follows. Catalyzes the transfer of electrons from NADPH to thioredoxins TRX1, TRX2 and TRX3, which in turn act as reductants of disulfide containing proteins. Able to reduce nitroglutathione (GSNO), a compound involved in the transport of nitric oxide (NO); however, TRX1 is more efficient in reducing GSNO. Has no catalytic activity towards oxidized glutathione (GSSG). The protein is Thioredoxin reductase of Plasmodium falciparum (isolate FCH-5).